Reading from the N-terminus, the 352-residue chain is MTATATRHDWTLQEARELFNLPFNDLLFRAQSIHREHFDPNEVQVSTLLSIKTGACPEDCKYCPQSGHYNTGLEKEKLLEIEKVVAEARVAREKGASRFCMGAAWRSPSKKDMPYVLDMVRQVKSLGLETCMTLGMLKEEEAKELADAGLDYYNHNLDTSEKYYNHIITTRTYQDRLDTLDNVRKAGMKVCCGGIMGMGEDEDDRVGLLVQLANLPQHPESVPVNMLVKVKGTPLEDVEDLDPFDFIRIIAVARIMMPASHVRLSAGREQMNEQMQALCFMAGANSIFYGEKLLTTSNPEADADMQLFRKLGIRPEQREQCATEEQEEEAIAEAVEYEATRHMFYDATRESA.

Positions 41 to 268 constitute a Radical SAM core domain; that stretch reads NEVQVSTLLS…ASHVRLSAGR (228 aa). The [4Fe-4S] cluster site is built by Cys56, Cys60, and Cys63. [2Fe-2S] cluster is bound by residues Cys100, Cys131, Cys191, and Arg263.

Belongs to the radical SAM superfamily. Biotin synthase family. In terms of assembly, homodimer. The cofactor is [4Fe-4S] cluster. [2Fe-2S] cluster is required as a cofactor.

It carries out the reaction (4R,5S)-dethiobiotin + (sulfur carrier)-SH + 2 reduced [2Fe-2S]-[ferredoxin] + 2 S-adenosyl-L-methionine = (sulfur carrier)-H + biotin + 2 5'-deoxyadenosine + 2 L-methionine + 2 oxidized [2Fe-2S]-[ferredoxin]. The protein operates within cofactor biosynthesis; biotin biosynthesis; biotin from 7,8-diaminononanoate: step 2/2. Functionally, catalyzes the conversion of dethiobiotin (DTB) to biotin by the insertion of a sulfur atom into dethiobiotin via a radical-based mechanism. This Marinobacter nauticus (strain ATCC 700491 / DSM 11845 / VT8) (Marinobacter aquaeolei) protein is Biotin synthase.